The sequence spans 810 residues: Plasminogen (810 aa).

The N-terminal stretch at 1–19 (MQRKELVLLFLLFLQPGHG) is a signal peptide. Positions 20-98 (IPLDDYVTTQ…RDVILFEKKM (79 aa)) constitute a PAN domain. Intrachain disulfides connect C49–C73, C53–C61, C103–C181, C124–C164, C152–C176, C185–C262, C188–C316, C206–C245, C234–C257, C275–C352, C296–C335, C324–C347, C379–C456, C400–C439, C428–C451, C482–C561, C503–C544, C532–C556, C569–C685, C579–C586, C607–C623, C699–C766, C729–C745, and C756–C784. Kringle domains lie at 103–181 (CKVG…IIQC), 185–262 (CMHC…IPRC), 275–352 (CLMG…IPDC), 379–456 (CYQG…LKKC), and 482–561 (CIID…IPHC). The N-linked (GlcNAc...) asparagine glycan is linked to N339. The tract at residues 398 to 418 (KKCQPWTSMRPHRHSKTPENY) is disordered. In terms of domain architecture, Peptidase S1 spans 582 to 808 (RVGGCVAHPH…YVSWLQDVMR (227 aa)). S598 bears the Phosphoserine mark. Catalysis depends on charge relay system residues H622 and D665. The active-site Charge relay system is the S760.

The protein belongs to the peptidase S1 family. Plasminogen subfamily. Interacts with CSPG4 and AMOT. Interacts (via the Kringle domains) with HRG; the interaction tethers PLG to the cell surface and enhances its activation. Interacts (via Kringle 4 domain) with ADA; the interaction stimulates PLG activation when in complex with DPP4. Angiostatin: Interacts with ATP5F1A; the interaction inhibits most of the angiogenic effects of angiostatin. In the presence of the inhibitor, the activation involves only cleavage after Arg-582, yielding two chains held together by two disulfide bonds. In the absence of the inhibitor, the activation involves additionally the removal of the activation peptide.

It localises to the secreted. It carries out the reaction Preferential cleavage: Lys-|-Xaa &gt; Arg-|-Xaa, higher selectivity than trypsin. Converts fibrin into soluble products.. Converted into plasmin by plasminogen activators, both plasminogen and its activator being bound to fibrin. Cannot be activated with streptokinase. In terms of biological role, plasmin dissolves the fibrin of blood clots and acts as a proteolytic factor in a variety of other processes including embryonic development, tissue remodeling, tumor invasion, and inflammation. In ovulation, weakens the walls of the Graafian follicle. It activates the urokinase-type plasminogen activator, collagenases and several complement zymogens, such as C1, C4 and C5. Cleavage of fibronectin and laminin leads to cell detachment and apoptosis. Also cleaves fibrin, thrombospondin and von Willebrand factor. Its role in tissue remodeling and tumor invasion may be modulated by CSPG4. Binds to cells. The chain is Plasminogen (PLG) from Erinaceus europaeus (Western European hedgehog).